The primary structure comprises 123 residues: Ribosome-binding factor A (123 aa).

It belongs to the RbfA family. In terms of assembly, monomer. Binds 30S ribosomal subunits, but not 50S ribosomal subunits or 70S ribosomes.

It localises to the cytoplasm. Its function is as follows. One of several proteins that assist in the late maturation steps of the functional core of the 30S ribosomal subunit. Associates with free 30S ribosomal subunits (but not with 30S subunits that are part of 70S ribosomes or polysomes). Required for efficient processing of 16S rRNA. May interact with the 5'-terminal helix region of 16S rRNA. The chain is Ribosome-binding factor A from Koribacter versatilis (strain Ellin345).